A 545-amino-acid polypeptide reads, in one-letter code: CTP synthase (545 aa).

The tract at residues 1–266 (MATNYIFVTG…DSFVCDRFRL (266 aa)) is amidoligase domain. Ser14 contacts CTP. Ser14 contacts UTP. ATP is bound by residues 15–20 (SLGKGI) and Asp72. Positions 72 and 140 each coordinate Mg(2+). Residues 147 to 149 (DIE), 187 to 192 (KTKPTQ), and Lys223 each bind CTP. UTP-binding positions include 187–192 (KTKPTQ) and Lys223. 239–241 (KDV) provides a ligand contact to ATP. Residues 291–542 (TIGMVGKYVE…VAAAKAYQDS (252 aa)) form the Glutamine amidotransferase type-1 domain. Gly352 serves as a coordination point for L-glutamine. Cys379 (nucleophile; for glutamine hydrolysis) is an active-site residue. L-glutamine is bound by residues 380–383 (LGMQ), Glu403, and Arg470. Catalysis depends on residues His515 and Glu517.

The protein belongs to the CTP synthase family. As to quaternary structure, homotetramer.

The enzyme catalyses UTP + L-glutamine + ATP + H2O = CTP + L-glutamate + ADP + phosphate + 2 H(+). It carries out the reaction L-glutamine + H2O = L-glutamate + NH4(+). It catalyses the reaction UTP + NH4(+) + ATP = CTP + ADP + phosphate + 2 H(+). The protein operates within pyrimidine metabolism; CTP biosynthesis via de novo pathway; CTP from UDP: step 2/2. With respect to regulation, allosterically activated by GTP, when glutamine is the substrate; GTP has no effect on the reaction when ammonia is the substrate. The allosteric effector GTP functions by stabilizing the protein conformation that binds the tetrahedral intermediate(s) formed during glutamine hydrolysis. Inhibited by the product CTP, via allosteric rather than competitive inhibition. Its function is as follows. Catalyzes the ATP-dependent amination of UTP to CTP with either L-glutamine or ammonia as the source of nitrogen. Regulates intracellular CTP levels through interactions with the four ribonucleotide triphosphates. This is CTP synthase from Haemophilus ducreyi (strain 35000HP / ATCC 700724).